A 263-amino-acid polypeptide reads, in one-letter code: uncharacterized protein (263 aa).

The WD repeat unit spans residues 53-89; it reads SAVTASKFSPDGRWLVNLTDQGYVQLWDVHKGERVKT.

This is an uncharacterized protein from Deinococcus radiodurans (strain ATCC 13939 / DSM 20539 / JCM 16871 / CCUG 27074 / LMG 4051 / NBRC 15346 / NCIMB 9279 / VKM B-1422 / R1).